The sequence spans 218 residues: NAD(P)H-quinone oxidoreductase subunit I (218 aa).

2 4Fe-4S ferredoxin-type domains span residues 55–84 and 95–124; these read GRIHYEFDKCIACEVCVRVCPINLPVVDWV and RNYSIDFGACIFCGNCVEYCPTNCLSMTEE. The [4Fe-4S] cluster site is built by C64, C67, C70, C74, C104, C107, C110, and C114. The segment at 179 to 218 is disordered; it reads LRAGKLPSQIIKELQADKSEEEGKNNSSDMVPNKLNSTNK. Positions 192-202 are enriched in basic and acidic residues; it reads LQADKSEEEGK. The segment covering 203–218 has biased composition (polar residues); sequence NNSSDMVPNKLNSTNK.

It belongs to the complex I 23 kDa subunit family. In terms of assembly, NDH-1 is composed of at least 11 different subunits. [4Fe-4S] cluster is required as a cofactor.

The protein localises to the cellular thylakoid membrane. It catalyses the reaction a plastoquinone + NADH + (n+1) H(+)(in) = a plastoquinol + NAD(+) + n H(+)(out). It carries out the reaction a plastoquinone + NADPH + (n+1) H(+)(in) = a plastoquinol + NADP(+) + n H(+)(out). Its function is as follows. NDH-1 shuttles electrons from an unknown electron donor, via FMN and iron-sulfur (Fe-S) centers, to quinones in the respiratory and/or the photosynthetic chain. The immediate electron acceptor for the enzyme in this species is believed to be plastoquinone. Couples the redox reaction to proton translocation, and thus conserves the redox energy in a proton gradient. The chain is NAD(P)H-quinone oxidoreductase subunit I from Prochlorococcus marinus (strain NATL2A).